We begin with the raw amino-acid sequence, 715 residues long: Scinderin (715 aa).

The tract at residues 1 to 363 is actin-severing; sequence MARELYHEEF…DGFGKVYVTE (363 aa). A Gelsolin-like 1 repeat occupies 27 to 76; that stretch reads LELVPVPQSAHGDFYVGDAYLVLHTAKTSRGFTYHLHFWLGKECSQDEST. Residue Tyr-102 is modified to Phosphotyrosine. A 1,2-diacyl-sn-glycero-3-phospho-(1D-myo-inositol-4,5-bisphosphate)-binding positions include 112–119 and 138–146; these read KGGLKYKA and RLLHVKGRR. Gelsolin-like repeat units lie at residues 148 to 188, 265 to 307, 398 to 451, and 523 to 564; these read VRAT…YERL, VVAE…QERK, VEIW…DELT, and TRIV…EEEK. Positions 364–715 are ca(2+)-dependent actin binding; that stretch reads KVAQIKQIPF…WFLGWDSSKW (352 aa). Residues Asn-538, Asp-539, and Glu-562 each contribute to the Ca(2+) site. Tyr-599 is subject to Phosphotyrosine. A Gelsolin-like 6 repeat occupies 626 to 668; that stretch reads FVIEEIPGEFTQDDLAEDDVMLLDAWEQIFIWIGKDANEVEKK. 3 residues coordinate Ca(2+): Asp-643, Asp-644, and Glu-666.

The protein belongs to the villin/gelsolin family. Expressed in megakaryocytes.

Its subcellular location is the cytoplasm. It localises to the cytoskeleton. It is found in the cell projection. The protein localises to the podosome. Ca(2+)-dependent actin filament-severing protein that has a regulatory function in exocytosis by affecting the organization of the microfilament network underneath the plasma membrane. Severing activity is inhibited by phosphatidylinositol 4,5-bis-phosphate (PIP2). In vitro, also has barbed end capping and nucleating activities in the presence of Ca(2+). Required for megakaryocyte differentiation, maturation, polyploidization and apoptosis with the release of platelet-like particles. Plays a role in osteoclastogenesis (OCG) and actin cytoskeletal organization in osteoclasts. Regulates chondrocyte proliferation and differentiation. Inhibits cell proliferation and tumorigenesis. Signaling is mediated by MAPK, p38 and JNK pathways. The polypeptide is Scinderin (Homo sapiens (Human)).